The primary structure comprises 315 residues: MQCNDVQATEPDIKVSLTRVGVTNLKKLVKLKRTNKRDIVLLPTFEVFVDLPSSQKGIHMSRSPEVIEEVVENILLEKEIYGVEDLSVEIVMKLFEKHEYATRAEVMLYSDYMMEETSPVTQKDSQEIAKIMARAYGVKDDCGKIHVKKMVGAEVVGITACPCAQNMLKENAVTSLKEKGFSSEDIEKILDSVTIATHNQRGIGTVMIEVPSGYTVGISKIIKIIKDSMSGEVYELLKRSDEAYVVEMAHKNPKFVEDCAREMIKRVVDVFDYLPEDTQVLVRQVNKESIHRHDAFAERNSTIRELRDELKTLTN.

The protein belongs to the GTP cyclohydrolase IV family. As to quaternary structure, homodimer. Requires Fe(2+) as cofactor.

It catalyses the reaction GTP + H2O = 7,8-dihydroneopterin 2',3'-cyclic phosphate + formate + diphosphate + H(+). The protein operates within cofactor biosynthesis; 5,6,7,8-tetrahydromethanopterin biosynthesis. Functionally, converts GTP to 7,8-dihydro-D-neopterin 2',3'-cyclic phosphate, the first intermediate in the biosynthesis of coenzyme methanopterin. This is GTP cyclohydrolase MptA from Methanococcus maripaludis (strain C7 / ATCC BAA-1331).